An 87-amino-acid polypeptide reads, in one-letter code: Small ribosomal subunit protein uS17 (87 aa).

This sequence belongs to the universal ribosomal protein uS17 family. Part of the 30S ribosomal subunit.

Functionally, one of the primary rRNA binding proteins, it binds specifically to the 5'-end of 16S ribosomal RNA. The chain is Small ribosomal subunit protein uS17 from Listeria innocua serovar 6a (strain ATCC BAA-680 / CLIP 11262).